The following is a 339-amino-acid chain: Heat-inducible transcription repressor HrcA (339 aa).

Belongs to the HrcA family.

Negative regulator of class I heat shock genes (grpE-dnaK-dnaJ and groELS operons). Prevents heat-shock induction of these operons. This Paraburkholderia phytofirmans (strain DSM 17436 / LMG 22146 / PsJN) (Burkholderia phytofirmans) protein is Heat-inducible transcription repressor HrcA.